Here is a 557-residue protein sequence, read N- to C-terminus: Membrane protein insertase YidC (557 aa).

The chain crosses the membrane as a helical span at residues 7–27 (ILLVALAVVSYLLVLQWNQDY). A disordered region spans residues 42 to 77 (ASPALPETVPGDSSTSADVPTAGSGNQVPDSAASTA). Over residues 52 to 77 (GDSSTSADVPTAGSGNQVPDSAASTA) the composition is skewed to polar residues. The next 3 membrane-spanning stretches (helical) occupy residues 370-390 (WGWS…PLSA), 436-456 (LGGC…YWVL), and 514-534 (PIIF…YWVV).

It belongs to the OXA1/ALB3/YidC family. Type 1 subfamily. As to quaternary structure, interacts with the Sec translocase complex via SecD. Specifically interacts with transmembrane segments of nascent integral membrane proteins during membrane integration.

The protein localises to the cell inner membrane. Its function is as follows. Required for the insertion and/or proper folding and/or complex formation of integral membrane proteins into the membrane. Involved in integration of membrane proteins that insert both dependently and independently of the Sec translocase complex, as well as at least some lipoproteins. Aids folding of multispanning membrane proteins. The protein is Membrane protein insertase YidC of Azotobacter vinelandii (strain DJ / ATCC BAA-1303).